Consider the following 268-residue polypeptide: MGLSPSAPAVAVQASNASASPPSGCPMHEGKMKGCPVNTEPSGPTCEKKTYSVPAHQERAYEYVECPIRGTAAENKENLDPSNLMPPPNQTPAPDQPFALSTVREESSIPRADSEKKWVYPSEQMFWNAMLKKGWKWKDEDISQKDMYNIIRIHNQNNEQAWKEILKWEALHAAECPCGPSLIRFGGKAKEYSPRARIRSWMGYELPFDRHDWIINRCGTEVRYVIDYYDGGEVNKDYQFTILDVRPALDSLSAVWDRMKVAWWRWTS.

The span at 1-22 (MGLSPSAPAVAVQASNASASPP) shows a compositional bias: low complexity. The interval 1–25 (MGLSPSAPAVAVQASNASASPPSGC) is disordered. G2 carries N-myristoyl glycine lipidation. HRM repeat units follow at residues 24 to 29 (GCPMHE) and 34 to 39 (GCPVNT).

Belongs to the cytochrome c-type heme lyase family.

The protein localises to the mitochondrion inner membrane. Its subcellular location is the membrane. The enzyme catalyses holo-[cytochrome c] = apo-[cytochrome c] + heme b. In terms of biological role, lyase that catalyzes the covalent linking of the heme group to the cytochrome C apoprotein to produce the mature functional cytochrome. This chain is Holocytochrome c-type synthase, found in Homo sapiens (Human).